A 193-amino-acid chain; its full sequence is Probable GTP-binding protein EngB (193 aa).

The EngB-type G domain maps to 22 to 193 (GLPEFAFAGR…LIAVLESYLA (172 aa)). Residues 30–37 (GRSNVGKS), 57–61 (GKTQG), 75–78 (DLPG), 142–145 (TKID), and 173–175 (FSS) each bind GTP. Mg(2+) contacts are provided by S37 and T59.

This sequence belongs to the TRAFAC class TrmE-Era-EngA-EngB-Septin-like GTPase superfamily. EngB GTPase family. Mg(2+) serves as cofactor.

Necessary for normal cell division and for the maintenance of normal septation. This Desulfotalea psychrophila (strain LSv54 / DSM 12343) protein is Probable GTP-binding protein EngB.